We begin with the raw amino-acid sequence, 198 residues long: MAPARLFALLLFFVGGVAESIRETEVIDPQDLLEGRYFSGALPDDEDVVGPGQESDDFELSGSGDLDDLEDSMIGPEVVHPLVPLDNHIPERAGSGSQVPTEPKKLEENEVIPKRISPVEESEDVSNKVSMSSTVQGSNIFERTEVLAALIVGGIVGILFAVFLILLLMYRMKKKDEGSYDLGKKPIYKKAPTNEFYA.

A signal peptide spans 1 to 18 (MAPARLFALLLFFVGGVA). Topologically, residues 19–145 (ESIRETEVID…QGSNIFERTE (127 aa)) are extracellular. O-linked (Xyl...) (glycosaminoglycan) serine glycosylation is found at serine 39, serine 61, and serine 63. A glycan (O-linked (Xyl...) (chondroitin sulfate) serine) is linked at serine 95. The helical transmembrane segment at 146–170 (VLAALIVGGIVGILFAVFLILLLMY) threads the bilayer. Residues 171 to 198 (RMKKKDEGSYDLGKKPIYKKAPTNEFYA) lie on the Cytoplasmic side of the membrane.

The protein belongs to the syndecan proteoglycan family. Homodimer. Interacts (via its cytoplasmic domain) with GIPC (via its PDZ domain). Interacts (via its cytoplasmic domain) with NUDT16L1. Interacts with CDCP1 and SDCBP. Interacts with DNM2; this interaction is markedly enhanced at focal ahesion site upon induction of focal adhesions and stress-fiber formation. Shedding is enhanced by a number of factors such as heparanase, thrombin or EGF. Also by stress and wound healing. PMA-mediated shedding is inhibited by TIMP3. Post-translationally, O-glycosylated; contains both chondroitin sulfate and heparan sulfate. Ser-39, Ser-61 and Ser-63 can all be modified by either chondroitin sulfate or heparan sulfate, and the protein exists in forms that contain only chondroitin sulfate, only heparan sulfate and both chondroitin sulfate and heparan sulfate. In terms of tissue distribution, detected in fibroblasts (at protein level). Also expressed in epithelial cells.

The protein resides in the membrane. It localises to the secreted. Cell surface proteoglycan which regulates exosome biogenesis in concert with SDCBP and PDCD6IP. The sequence is that of Syndecan-4 from Homo sapiens (Human).